The sequence spans 412 residues: UV DNA damage endonuclease (412 aa).

Belongs to the uve1/UvsE family.

In terms of biological role, component in a DNA repair pathway. Removal of UV LIGHT damaged nucleotides. Recognizes pyrimidine dimers and cleave a phosphodiester bond immediately 5' to the lesion. This chain is UV DNA damage endonuclease, found in Clostridium perfringens (strain 13 / Type A).